Here is a 369-residue protein sequence, read N- to C-terminus: Uroporphyrinogen decarboxylase (369 aa).

8 residues coordinate coproporphyrinogen I: Arg39, Ala41, Arg43, Arg52, Asp88, Tyr166, Ser221, and His341. Coproporphyrinogen III is bound by residues Arg39, Ala41, and Arg43. Residues Asp88, Tyr166, Ser221, and His341 each contribute to the coproporphyrinogen III site.

The protein belongs to the uroporphyrinogen decarboxylase family. As to quaternary structure, homodimer.

It is found in the cytoplasm. The protein resides in the cytosol. It catalyses the reaction uroporphyrinogen III + 4 H(+) = coproporphyrinogen III + 4 CO2. It carries out the reaction uroporphyrinogen I + 4 H(+) = coproporphyrinogen I + 4 CO2. It participates in porphyrin-containing compound metabolism; protoporphyrin-IX biosynthesis; coproporphyrinogen-III from 5-aminolevulinate: step 4/4. Catalyzes the sequential decarboxylation of the four acetate side chains of uroporphyrinogen to form coproporphyrinogen and participates in the fifth step in the heme biosynthetic pathway. Isomer I or isomer III of uroporphyrinogen may serve as substrate, but only coproporphyrinogen III can ultimately be converted to heme. In vitro also decarboxylates pentacarboxylate porphyrinogen I. The sequence is that of Uroporphyrinogen decarboxylase from Danio rerio (Zebrafish).